A 298-amino-acid chain; its full sequence is Cyclin-dependent kinase 2 (298 aa).

A Protein kinase domain is found at Phe-4–Phe-286. ATP is bound by residues Ile-10–Val-18, Lys-33, Glu-81–Leu-83, and Asp-86. Thr-14 carries the post-translational modification Phosphothreonine. A Phosphotyrosine modification is found at Tyr-15. Catalysis depends on Asp-127, which acts as the Proton acceptor. Residues Lys-129–Asn-132 and Asp-145 contribute to the ATP site. The residue at position 160 (Thr-160) is a Phosphothreonine; by CAK.

The protein belongs to the protein kinase superfamily. CMGC Ser/Thr protein kinase family. CDC2/CDKX subfamily.

The enzyme catalyses L-seryl-[protein] + ATP = O-phospho-L-seryl-[protein] + ADP + H(+). The catalysed reaction is L-threonyl-[protein] + ATP = O-phospho-L-threonyl-[protein] + ADP + H(+). Phosphorylation at Thr-14 or Tyr-15 inactivates the enzyme, while phosphorylation at Thr-160 activates it. Functionally, serine/threonine-protein kinase involved in the control of the cell cycle; essential for meiosis, but dispensable for mitosis. Triggers duplication of centrosomes and DNA. Acts at the G1-S transition to promote the E2F transcriptional program and the initiation of DNA synthesis, and modulates G2 progression; controls the timing of entry into mitosis/meiosis by controlling the subsequent activation of cyclin B/CDK1 by phosphorylation, and coordinates the activation of cyclin B/CDK1 at the centrosome and in the nucleus. Crucial role in orchestrating a fine balance between cellular proliferation, cell death, and DNA repair in embryonic stem cells (ESCs). Activity of CDK2 is maximal during S phase and G2; activated by interaction with cyclin E during the early stages of DNA synthesis to permit G1-S transition, and subsequently activated by cyclin A2 (cyclin A1 in germ cells) during the late stages of DNA replication to drive the transition from S phase to mitosis, the G2 phase. This Carassius auratus (Goldfish) protein is Cyclin-dependent kinase 2 (cdk2).